Here is a 124-residue protein sequence, read N- to C-terminus: Small ribosomal subunit protein uS12 (124 aa).

D89 bears the 3-methylthioaspartic acid mark.

It belongs to the universal ribosomal protein uS12 family. In terms of assembly, part of the 30S ribosomal subunit. Contacts proteins S8 and S17. May interact with IF1 in the 30S initiation complex.

In terms of biological role, with S4 and S5 plays an important role in translational accuracy. Interacts with and stabilizes bases of the 16S rRNA that are involved in tRNA selection in the A site and with the mRNA backbone. Located at the interface of the 30S and 50S subunits, it traverses the body of the 30S subunit contacting proteins on the other side and probably holding the rRNA structure together. The combined cluster of proteins S8, S12 and S17 appears to hold together the shoulder and platform of the 30S subunit. This chain is Small ribosomal subunit protein uS12, found in Aliivibrio fischeri (strain ATCC 700601 / ES114) (Vibrio fischeri).